The chain runs to 343 residues: Protease inhibitor Egf1.5a (343 aa).

Positions 1–28 (MYIDTGIMSNNIFLFAFFALVGLTRIEA) are cleaved as a signal peptide. A TIL domain is found at 52–104 (CRENEHYNSTRIECEDECNDRNNKLCYRFQQFCWCNEGYIRNSSHICVKLEDC).

It belongs to the polydnaviridae EGF-like motif protein family. In terms of assembly, interacts with host PAP1, PAP3 and SPH2.

Its function is as follows. Counteracts the host humoral immune response by inhibiting the processing and the amidolytic activity of host PAP1 and PAP3. Thereby, melanization of host hemolymph, normally producing several reactive intermediates toxic for viruses, is deregulated and proper immune response cannot occur. This chain is Protease inhibitor Egf1.5a (O1), found in Microplitis demolitor bracovirus (isolate Webb) (MdBV).